The primary structure comprises 195 residues: Rac-like GTP-binding protein ARAC4 (195 aa).

Residues 12 to 19, 30 to 37, 59 to 63, and 117 to 120 each bind GTP; these read GDGAVGKT, FPTDYVPT, DTAGQ, and TKLD. Residues 34 to 42 carry the Effector region motif; sequence YVPTVFDNF. Cys192 bears the Cysteine methyl ester mark. Cys192 is lipidated: S-geranylgeranyl cysteine. Positions 193–195 are cleaved as a propeptide — removed in mature form; the sequence is AFL.

Belongs to the small GTPase superfamily. Rho family. In terms of assembly, interacts with SPK1, ICR1, ICR5 and PIR. As to expression, ubiquitous.

The protein localises to the cytoplasm. Its subcellular location is the cell membrane. Inactive GDP-bound Rho GTPases reside in the cytosol, are found in a complex with Rho GDP-dissociation inhibitors (Rho GDIs), and are released from the GDI protein in order to translocate to membranes upon activation. Involved in cell polarity control during the actin-dependent tip growth of root hairs, thus regulating root hair length and root hair initiation. Contributes, in a SPK1-dependent manner, to the prevention of cortical microtubules organization into parallel arrays oriented perpendicular to the axis of cell elongation to limit anisotropic cell growth during petal development. May regulate a WAVE complex that activates the Arp2/3 complex. This chain is Rac-like GTP-binding protein ARAC4, found in Arabidopsis thaliana (Mouse-ear cress).